The chain runs to 134 residues: MHIALIAHDEKKDLMVGFATAYKHLLEPHQLYATGTTGLRIIEATGLTVHRFKSGPLGGDQQIGARISENKMDLVIFLRDPLTAQPHEPDVTALIRLCDVYEIPLATNIGTAEILIRGLGAGFLDWRDLRRNDE.

The MGS-like domain maps to 1-134; sequence MHIALIAHDE…DWRDLRRNDE (134 aa). Substrate-binding positions include His-8, Lys-12, 34–37, and 54–55; these read TGTT and SG. Catalysis depends on Asp-60, which acts as the Proton donor/acceptor. A substrate-binding site is contributed by His-87.

This sequence belongs to the methylglyoxal synthase family.

It catalyses the reaction dihydroxyacetone phosphate = methylglyoxal + phosphate. Catalyzes the formation of methylglyoxal from dihydroxyacetone phosphate. The sequence is that of Methylglyoxal synthase from Listeria monocytogenes serotype 4b (strain CLIP80459).